Here is a 348-residue protein sequence, read N- to C-terminus: Phospho-2-dehydro-3-deoxyheptonate aldolase, Trp-sensitive (348 aa).

It belongs to the class-I DAHP synthase family.

The catalysed reaction is D-erythrose 4-phosphate + phosphoenolpyruvate + H2O = 7-phospho-2-dehydro-3-deoxy-D-arabino-heptonate + phosphate. It functions in the pathway metabolic intermediate biosynthesis; chorismate biosynthesis; chorismate from D-erythrose 4-phosphate and phosphoenolpyruvate: step 1/7. Functionally, stereospecific condensation of phosphoenolpyruvate (PEP) and D-erythrose-4-phosphate (E4P) giving rise to 3-deoxy-D-arabino-heptulosonate-7-phosphate (DAHP). This is Phospho-2-dehydro-3-deoxyheptonate aldolase, Trp-sensitive (aroH) from Escherichia coli O6:H1 (strain CFT073 / ATCC 700928 / UPEC).